Reading from the N-terminus, the 322-residue chain is Pre-mRNA-splicing factor NTR2 (322 aa).

The segment at 1-30 (MAIKKRNKIRLPSGSPEEVGIDGSAHKPMQ) is disordered. Ser-40 is modified (phosphoserine). Residues 113–137 (LLSDSSEAGSSSEGEHISSIPTRGE) form a disordered region. Residues 115-132 (SDSSEAGSSSEGEHISSI) show a composition bias toward low complexity. Ser-153 and Ser-197 each carry phosphoserine.

Component of the NTR complex (NTC-related complex), composed of NTR1, NTR2 and PRP43. Interacts with CLF1, NTR1 and PRP43.

Its subcellular location is the cytoplasm. It is found in the nucleus. Its function is as follows. Involved in pre-mRNA splicing and spliceosome disassembly. Promotes release of excised lariat intron from the spliceosome by acting as a receptor for PRP43. This targeting of PRP43 leads to disassembly of the spliceosome with the separation of the U2, U5, U6 snRNPs and the NTC complex. This is Pre-mRNA-splicing factor NTR2 (NTR2) from Saccharomyces cerevisiae (strain ATCC 204508 / S288c) (Baker's yeast).